A 389-amino-acid polypeptide reads, in one-letter code: COP9 signalosome complex subunit 11 (389 aa).

Positions 143-312 (QLIIDIPNLV…ILYQKFDPQM (170 aa)) constitute a PCI domain.

Component of a COP9 signalosome-like (CSN) complex.

The protein localises to the cytoplasm. The protein resides in the nucleus. In terms of biological role, component of the COP9 signalosome (CSN) complex that acts as an regulator of the ubiquitin (Ubl) conjugation pathway by mediating the deneddylation of the cullin subunit of SCF-type E3 ubiquitin-protein ligase complexes The CSN complex is involved in the regulation of the mating pheromone response. PCI8 may also be involved in transcriptional and translational control. The polypeptide is COP9 signalosome complex subunit 11 (PCI8) (Kluyveromyces lactis (strain ATCC 8585 / CBS 2359 / DSM 70799 / NBRC 1267 / NRRL Y-1140 / WM37) (Yeast)).